Here is a 416-residue protein sequence, read N- to C-terminus: Chromate transport protein (416 aa).

The disordered stretch occupies residues 1-21; the sequence is MSVANEESYRPSKATDATTEA. 11 helical membrane passes run 99–119, 128–148, 160–177, 181–198, 204–224, 237–257, 283–303, 308–328, 341–361, 371–391, and 395–415; these read LGGV…MFAL, FVGT…IALI, LLDR…LAAI, DFWI…LLVL, ALLV…WAAP, ASVL…FGGA, LALS…VGYV, IGAV…SLIF, LHAF…ATTI, VPSL…LYAW, and LNVV…FPNQ.

Belongs to the chromate ion transporter (CHR) (TC 2.A.51) family.

It is found in the cell inner membrane. This protein reduces chromate accumulation and is essential for chromate resistance. The polypeptide is Chromate transport protein (Pseudomonas aeruginosa).